A 130-amino-acid chain; its full sequence is Small ribosomal subunit protein uS8 (130 aa).

The protein belongs to the universal ribosomal protein uS8 family. As to quaternary structure, part of the 30S ribosomal subunit. Contacts proteins S5 and S12.

Functionally, one of the primary rRNA binding proteins, it binds directly to 16S rRNA central domain where it helps coordinate assembly of the platform of the 30S subunit. The sequence is that of Small ribosomal subunit protein uS8 from Yersinia enterocolitica serotype O:8 / biotype 1B (strain NCTC 13174 / 8081).